The sequence spans 178 residues: MSRVAKRPILIPEGIKIELNLQSISIKGKYGYLSRIIHDAVKVECLNNKITFSIRSGFSDAWAQAGTSRALVNSMIIGVSKKFSKKLQFSGVGYRVSLTKGNIVNMSLGYSHPIVYSLPPYIEAENPSPTEIVIKGVDKQLVGQIAANLRSYRRPEPYKGKGIRYSNEVVHMKEAKKK.

The protein belongs to the universal ribosomal protein uL6 family. As to quaternary structure, part of the 50S ribosomal subunit.

In terms of biological role, this protein binds to the 23S rRNA, and is important in its secondary structure. It is located near the subunit interface in the base of the L7/L12 stalk, and near the tRNA binding site of the peptidyltransferase center. The polypeptide is Large ribosomal subunit protein uL6 (Buchnera aphidicola subsp. Schizaphis graminum (strain Sg)).